A 428-amino-acid polypeptide reads, in one-letter code: 3-phosphoshikimate 1-carboxyvinyltransferase (428 aa).

3 residues coordinate 3-phosphoshikimate: Lys-21, Ser-22, and Arg-26. Phosphoenolpyruvate is bound at residue Lys-21. Positions 91 and 119 each coordinate phosphoenolpyruvate. Residues Ser-164, Gln-166, Asp-313, and Lys-340 each contribute to the 3-phosphoshikimate site. Residue Gln-166 participates in phosphoenolpyruvate binding. Asp-313 functions as the Proton acceptor in the catalytic mechanism. 2 residues coordinate phosphoenolpyruvate: Arg-344 and Arg-386.

It belongs to the EPSP synthase family. As to quaternary structure, monomer.

Its subcellular location is the cytoplasm. The catalysed reaction is 3-phosphoshikimate + phosphoenolpyruvate = 5-O-(1-carboxyvinyl)-3-phosphoshikimate + phosphate. It participates in metabolic intermediate biosynthesis; chorismate biosynthesis; chorismate from D-erythrose 4-phosphate and phosphoenolpyruvate: step 6/7. In terms of biological role, catalyzes the transfer of the enolpyruvyl moiety of phosphoenolpyruvate (PEP) to the 5-hydroxyl of shikimate-3-phosphate (S3P) to produce enolpyruvyl shikimate-3-phosphate and inorganic phosphate. In Campylobacter jejuni subsp. jejuni serotype O:6 (strain 81116 / NCTC 11828), this protein is 3-phosphoshikimate 1-carboxyvinyltransferase.